The following is a 425-amino-acid chain: Monoacylglycerol lipase ABHD2 (425 aa).

The Cytoplasmic portion of the chain corresponds to 1 to 9 (MNAMLETPE). Residues 10-30 (LPAVFDGVKLAAVAAVLYVIV) traverse the membrane as a helical; Signal-anchor for type II membrane protein segment. The Extracellular portion of the chain corresponds to 31–425 (RCLNLKSPTA…DTEQMEAELE (395 aa)). The AB hydrolase-1 domain maps to 128-382 (MVICPGIANH…HGGHLGFFEG (255 aa)). N-linked (GlcNAc...) asparagine glycosylation is present at N136. The Nucleophile role is filled by S207. Catalysis depends on charge relay system residues D345 and H376. N410 is a glycosylation site (N-linked (GlcNAc...) asparagine).

This sequence belongs to the AB hydrolase superfamily. AB hydrolase 4 family. Widely expressed with higher expression in testis. Expressed by vascular smooth muscle cells, non vascular smooth muscle cells and heart.

The protein resides in the cell membrane. The protein localises to the cytoplasmic vesicle. Its subcellular location is the secretory vesicle. It is found in the acrosome membrane. The catalysed reaction is Hydrolyzes glycerol monoesters of long-chain fatty acids.. The enzyme catalyses an acetyl ester + H2O = an aliphatic alcohol + acetate + H(+). It catalyses the reaction a triacylglycerol + H2O = a diacylglycerol + a fatty acid + H(+). It carries out the reaction 2-(5Z,8Z,11Z,14Z-eicosatetraenoyl)-glycerol + H2O = glycerol + (5Z,8Z,11Z,14Z)-eicosatetraenoate + H(+). The catalysed reaction is a butanoate ester + H2O = an aliphatic alcohol + butanoate + H(+). The enzyme catalyses hexadecanoate ester + H2O = an aliphatic alcohol + hexadecanoate + H(+). With respect to regulation, acylglycerol lipase activity is activated upon binding to progesterone. Progesterone-dependent acylglycerol lipase that catalyzes hydrolysis of endocannabinoid arachidonoylglycerol (AG) from cell membrane. Acts as a progesterone receptor: progesterone-binding activates the acylglycerol lipase activity, mediating degradation of 1-arachidonoylglycerol (1AG) and 2-arachidonoylglycerol (2AG) to glycerol and arachidonic acid (AA). Also displays an ester hydrolase activity against acetyl ester, butanoate ester and hexadecanoate ester. Plays a key role in sperm capacitation in response to progesterone by mediating degradation of 2AG, an inhibitor of the sperm calcium channel CatSper, leading to calcium influx via CatSper and sperm activation. Involved in acrosomal reaction. May also play a role in smooth muscle cells migration. In Mus musculus (Mouse), this protein is Monoacylglycerol lipase ABHD2 (Abhd2).